We begin with the raw amino-acid sequence, 1033 residues long: Calcium-transporting ATPase 12, plasma membrane-type (1033 aa).

Methionine 1 is modified (N-acetylmethionine). Residues 1 to 152 (MRDLKEYDYS…NTYHKPPPKG (152 aa)) are Cytoplasmic-facing. An interaction with calmodulin region spans residues 25 to 36 (QRRWRFAYAAIY). Serine 37 is subject to Phosphoserine. A helical membrane pass occupies residues 153–173 (LLFFVYEAFKDLTILILLVCA). At 174–191 (IFSLGFGIKEHGIKEGWY) the chain is on the lumenal side. The chain crosses the membrane as a helical span at residues 192-212 (EGGSIFVAVFLVIVVSALSNF). Residues 213–341 (RQERQFDKLS…SERTPLQVRL (129 aa)) are Cytoplasmic-facing. The chain crosses the membrane as a helical span at residues 342–361 (DTLTSTIGKIGLTVAALVLV). Residues 362–397 (VLLVRYFTGNTEKEGKREYNGSKTPVDTVVNSVVRI) lie on the Lumenal side of the membrane. A helical transmembrane segment spans residues 398-415 (VAAAVTIVVVAIPEGLPL). Over 416–806 (AVTLTLAYSM…KWGRCVYNNI (391 aa)) the chain is Cytoplasmic. The active-site 4-aspartylphosphate intermediate is aspartate 453. 2 residues coordinate Mg(2+): aspartate 751 and aspartate 755. The chain crosses the membrane as a helical span at residues 807-825 (QKFIQFQLTVNVAALVINF). Topologically, residues 826–836 (IAAISAGEVPL) are lumenal. The chain crosses the membrane as a helical span at residues 837 to 857 (TAVQLLWVNLIMDTLGALALA). Residues 858–877 (TERPTNELLKRKPVGRTEAL) are Cytoplasmic-facing. Residues 878–900 (ITNVMWRNLLVQSLYQIAVLLIL) traverse the membrane as a helical segment. The Lumenal segment spans residues 901–909 (QFKGMSIFS). The chain crosses the membrane as a helical span at residues 910 to 930 (VRKEVKDTLIFNTFVLCQVFN). Residues 931–948 (EFNAREMEKKNVFKGLHR) are Cytoplasmic-facing. A helical transmembrane segment spans residues 949 to 970 (NRLFIGIIAITIVLQVIMVEFL). Over 971-980 (KKFADTVRLN) the chain is Lumenal. Residues 981–1002 (GWQWGTCIALASLSWPIGFFTK) form a helical membrane-spanning segment. Residues 1003–1006 (FIPV) lie on the Cytoplasmic side of the membrane.

This sequence belongs to the cation transport ATPase (P-type) (TC 3.A.3) family. Type IIB subfamily.

The protein resides in the membrane. It catalyses the reaction Ca(2+)(in) + ATP + H2O = Ca(2+)(out) + ADP + phosphate + H(+). With respect to regulation, activated by calmodulin. Functionally, this magnesium-dependent enzyme catalyzes the hydrolysis of ATP coupled with the translocation of calcium from the cytosol out of the cell or into organelles. In Arabidopsis thaliana (Mouse-ear cress), this protein is Calcium-transporting ATPase 12, plasma membrane-type (ACA12).